The sequence spans 208 residues: FMN-dependent NADH:quinone oxidoreductase (208 aa).

Residues 17–19 (SNS), 99–102 (MWNL), and 143–146 (SRGG) contribute to the FMN site.

The protein belongs to the azoreductase type 1 family. As to quaternary structure, homodimer. Requires FMN as cofactor.

It catalyses the reaction 2 a quinone + NADH + H(+) = 2 a 1,4-benzosemiquinone + NAD(+). The enzyme catalyses N,N-dimethyl-1,4-phenylenediamine + anthranilate + 2 NAD(+) = 2-(4-dimethylaminophenyl)diazenylbenzoate + 2 NADH + 2 H(+). Its function is as follows. Quinone reductase that provides resistance to thiol-specific stress caused by electrophilic quinones. In terms of biological role, also exhibits azoreductase activity. Catalyzes the reductive cleavage of the azo bond in aromatic azo compounds to the corresponding amines. The chain is FMN-dependent NADH:quinone oxidoreductase from Staphylococcus aureus (strain Mu50 / ATCC 700699).